The following is a 207-amino-acid chain: U1 small nuclear ribonucleoprotein C (207 aa).

The segment at 4–36 adopts a Matrin-type zinc-finger fold; that stretch reads YYCDYCDTYLTHDSPSVRKQHNAGYKHKANVRI. 2 stretches are compositionally biased toward pro residues: residues 105–115 and 122–131; these read PPQGYMPPPGV and PGAPLPPPPQ. Positions 105 to 207 are disordered; sequence PPQGYMPPPG…PSAESPESNE (103 aa). Residues 132–144 show a composition bias toward low complexity; the sequence is NGILRPPGMAPIP. Residues 162-183 are compositionally biased toward pro residues; sequence GPPPNYNGLPPPPPYHTNPAAP. The span at 184-207 shows a compositional bias: low complexity; that stretch reads PSGNFNNPNLNNPNPSAESPESNE.

It belongs to the U1 small nuclear ribonucleoprotein C family. As to quaternary structure, U1 snRNP is composed of the 7 core Sm proteins B/B', D1, D2, D3, E, F and G that assemble in a heptameric protein ring on the Sm site of the small nuclear RNA to form the core snRNP, and at least 3 U1 snRNP-specific proteins U1-70K, U1-A and U1-C. U1-C interacts with U1 snRNA and the 5' splice-site region of the pre-mRNA.

The protein resides in the nucleus. Its function is as follows. Component of the spliceosomal U1 snRNP, which is essential for recognition of the pre-mRNA 5' splice-site and the subsequent assembly of the spliceosome. U1-C is directly involved in initial 5' splice-site recognition for both constitutive and regulated alternative splicing. The interaction with the 5' splice-site seems to precede base-pairing between the pre-mRNA and the U1 snRNA. Stimulates commitment or early (E) complex formation by stabilizing the base pairing of the 5' end of the U1 snRNA and the 5' splice-site region. The sequence is that of U1 small nuclear ribonucleoprotein C from Arabidopsis thaliana (Mouse-ear cress).